We begin with the raw amino-acid sequence, 107 residues long: Apolipoprotein E (107 aa).

5 consecutive repeat copies span residues 11–32, 33–54, 55–76, 77–98, and 99–107. A 5 X 22 AA approximate tandem repeats region spans residues 11-107; that stretch reads ALMDETMKEL…LRDVDDLQKR (97 aa). A Methionine sulfoxide modification is found at Met74. At Ser78 the chain carries Phosphoserine. An LDL and other lipoprotein receptors binding region spans residues 89–99; sequence HLRKLRKRLLR. 93 to 96 is a heparin binding site; the sequence is LRKR.

The protein belongs to the apolipoprotein A1/A4/E family. In terms of assembly, homotetramer. May interact with ABCA1; functionally associated with ABCA1 in the biogenesis of HDLs. May interact with APP/A4 amyloid-beta peptide; the interaction is extremely stable in vitro but its physiological significance is unclear. May interact with MAPT. May interact with MAP2. In the cerebrospinal fluid, interacts with secreted SORL1. Interacts with PMEL; this allows the loading of PMEL luminal fragment on ILVs to induce fibril nucleation. APOE exists as multiple glycosylated and sialylated glycoforms within cells and in plasma. The extent of glycosylation and sialylation are tissue and context specific. Post-translationally, glycated in plasma VLDL. In terms of processing, phosphorylated by FAM20C in the extracellular medium.

Its subcellular location is the secreted. The protein localises to the extracellular space. It is found in the extracellular matrix. The protein resides in the extracellular vesicle. It localises to the endosome. Its subcellular location is the multivesicular body. Functionally, APOE is an apolipoprotein, a protein associating with lipid particles, that mainly functions in lipoprotein-mediated lipid transport between organs via the plasma and interstitial fluids. APOE is a core component of plasma lipoproteins and is involved in their production, conversion and clearance. Apolipoproteins are amphipathic molecules that interact both with lipids of the lipoprotein particle core and the aqueous environment of the plasma. As such, APOE associates with chylomicrons, chylomicron remnants, very low density lipoproteins (VLDL) and intermediate density lipoproteins (IDL) but shows a preferential binding to high-density lipoproteins (HDL). It also binds a wide range of cellular receptors including the LDL receptor/LDLR, the LDL receptor-related proteins LRP1, LRP2 and LRP8 and the very low-density lipoprotein receptor/VLDLR that mediate the cellular uptake of the APOE-containing lipoprotein particles. Finally, APOE also has a heparin-binding activity and binds heparan-sulfate proteoglycans on the surface of cells, a property that supports the capture and the receptor-mediated uptake of APOE-containing lipoproteins by cells. A main function of APOE is to mediate lipoprotein clearance through the uptake of chylomicrons, VLDLs, and HDLs by hepatocytes. APOE is also involved in the biosynthesis by the liver of VLDLs as well as their uptake by peripheral tissues ensuring the delivery of triglycerides and energy storage in muscle, heart and adipose tissues. By participating in the lipoprotein-mediated distribution of lipids among tissues, APOE plays a critical role in plasma and tissues lipid homeostasis. APOE is also involved in two steps of reverse cholesterol transport, the HDLs-mediated transport of cholesterol from peripheral tissues to the liver, and thereby plays an important role in cholesterol homeostasis. First, it is functionally associated with ABCA1 in the biogenesis of HDLs in tissues. Second, it is enriched in circulating HDLs and mediates their uptake by hepatocytes. APOE also plays an important role in lipid transport in the central nervous system, regulating neuron survival and sprouting. This Saimiri sciureus (Common squirrel monkey) protein is Apolipoprotein E (APOE).